A 352-amino-acid chain; its full sequence is tRNA N6-adenosine threonylcarbamoyltransferase (352 aa).

Fe cation-binding residues include His115 and His119. Residues Leu138 to Gly142, Asp171, Gly184, and Asn277 each bind substrate. Residue Asp305 participates in Fe cation binding.

Belongs to the KAE1 / TsaD family. It depends on Fe(2+) as a cofactor.

The protein localises to the cytoplasm. It catalyses the reaction L-threonylcarbamoyladenylate + adenosine(37) in tRNA = N(6)-L-threonylcarbamoyladenosine(37) in tRNA + AMP + H(+). Required for the formation of a threonylcarbamoyl group on adenosine at position 37 (t(6)A37) in tRNAs that read codons beginning with adenine. Is involved in the transfer of the threonylcarbamoyl moiety of threonylcarbamoyl-AMP (TC-AMP) to the N6 group of A37, together with TsaE and TsaB. TsaD likely plays a direct catalytic role in this reaction. In Variovorax paradoxus (strain S110), this protein is tRNA N6-adenosine threonylcarbamoyltransferase.